We begin with the raw amino-acid sequence, 350 residues long: Ketol-acid reductoisomerase (NADP(+)) (350 aa).

One can recognise a KARI N-terminal Rossmann domain in the interval 4–187 (VSITTDYSRM…GGARANIIKT (184 aa)). NADP(+)-binding positions include 30 to 33 (YGSQ), arginine 53, threonine 58, and 88 to 91 (DMVQ). Histidine 113 is a catalytic residue. NADP(+) is bound at residue glycine 139. One can recognise a KARI C-terminal knotted domain in the interval 188–333 (TFKEETETDL…KQLRAKMVWL (146 aa)). The Mg(2+) site is built by aspartate 196, glutamate 200, glutamate 232, and glutamate 236. Serine 257 is a substrate binding site.

It belongs to the ketol-acid reductoisomerase family. Requires Mg(2+) as cofactor.

It catalyses the reaction (2R)-2,3-dihydroxy-3-methylbutanoate + NADP(+) = (2S)-2-acetolactate + NADPH + H(+). The enzyme catalyses (2R,3R)-2,3-dihydroxy-3-methylpentanoate + NADP(+) = (S)-2-ethyl-2-hydroxy-3-oxobutanoate + NADPH + H(+). It functions in the pathway amino-acid biosynthesis; L-isoleucine biosynthesis; L-isoleucine from 2-oxobutanoate: step 2/4. It participates in amino-acid biosynthesis; L-valine biosynthesis; L-valine from pyruvate: step 2/4. Functionally, involved in the biosynthesis of branched-chain amino acids (BCAA). Catalyzes an alkyl-migration followed by a ketol-acid reduction of (S)-2-acetolactate (S2AL) to yield (R)-2,3-dihydroxy-isovalerate. In the isomerase reaction, S2AL is rearranged via a Mg-dependent methyl migration to produce 3-hydroxy-3-methyl-2-ketobutyrate (HMKB). In the reductase reaction, this 2-ketoacid undergoes a metal-dependent reduction by NADPH to yield (R)-2,3-dihydroxy-isovalerate. The chain is Ketol-acid reductoisomerase (NADP(+)) from Xylella fastidiosa (strain 9a5c).